A 339-amino-acid chain; its full sequence is Phosphate acyltransferase (339 aa).

It belongs to the PlsX family. Homodimer. Probably interacts with PlsY.

The protein localises to the cytoplasm. The enzyme catalyses a fatty acyl-[ACP] + phosphate = an acyl phosphate + holo-[ACP]. It participates in lipid metabolism; phospholipid metabolism. Functionally, catalyzes the reversible formation of acyl-phosphate (acyl-PO(4)) from acyl-[acyl-carrier-protein] (acyl-ACP). This enzyme utilizes acyl-ACP as fatty acyl donor, but not acyl-CoA. The protein is Phosphate acyltransferase of Helicobacter pylori (strain J99 / ATCC 700824) (Campylobacter pylori J99).